A 452-amino-acid polypeptide reads, in one-letter code: Cobyrinate a,c-diamide synthase (452 aa).

The region spanning 246-439 (TLAYALDDAF…LHVHFYQDEQ (194 aa)) is the GATase cobBQ-type domain. Cys328 functions as the Nucleophile in the catalytic mechanism.

The protein belongs to the CobB/CbiA family. It depends on Mg(2+) as a cofactor.

It carries out the reaction cob(II)yrinate + 2 L-glutamine + 2 ATP + 2 H2O = cob(II)yrinate a,c diamide + 2 L-glutamate + 2 ADP + 2 phosphate + 2 H(+). Its pathway is cofactor biosynthesis; adenosylcobalamin biosynthesis; cob(II)yrinate a,c-diamide from sirohydrochlorin (anaerobic route): step 10/10. Catalyzes the ATP-dependent amidation of the two carboxylate groups at positions a and c of cobyrinate, using either L-glutamine or ammonia as the nitrogen source. This is Cobyrinate a,c-diamide synthase from Streptococcus sanguinis (strain SK36).